We begin with the raw amino-acid sequence, 269 residues long: Xyloglucan endotransglucosylase/hydrolase protein 24 (269 aa).

The signal sequence occupies residues 1–21; sequence MSPFKIFFFTTLLVAAFSVSA. A GH16 domain is found at 22–212; the sequence is ADFNTDVNVA…WSKAPFMASY (191 aa). Glu-98 serves as the catalytic Nucleophile. Glu-102 acts as the Proton donor in catalysis. Residue Glu-102 coordinates xyloglucan. Asn-106 carries N-linked (GlcNAc...) asparagine glycosylation. Xyloglucan is bound by residues 115–117, 125–127, 191–192, Gly-196, and Arg-256; these read HTN, DKE, and DW. An intrachain disulfide couples Cys-251 to Cys-265.

Belongs to the glycosyl hydrolase 16 family. XTH group 2 subfamily. Contains at least one intrachain disulfide bond essential for its enzymatic activity. In terms of processing, N-glycosylated; essential for its enzymatic activity. Highly expressed. Predominantly expressed in stems. Expressed in shoot apical meristems, also found in seedlings and meristems.

The protein resides in the secreted. The protein localises to the cell wall. It is found in the extracellular space. It localises to the apoplast. It catalyses the reaction breaks a beta-(1-&gt;4) bond in the backbone of a xyloglucan and transfers the xyloglucanyl segment on to O-4 of the non-reducing terminal glucose residue of an acceptor, which can be a xyloglucan or an oligosaccharide of xyloglucan.. Catalyzes xyloglucan endohydrolysis (XEH) and/or endotransglycosylation (XET). Cleaves and religates xyloglucan polymers, an essential constituent of the primary cell wall, and thereby participates in cell wall construction of growing tissues. May be required during development to modify the walls of cells under mechanical stress. The protein is Xyloglucan endotransglucosylase/hydrolase protein 24 (XTH24) of Arabidopsis thaliana (Mouse-ear cress).